The following is a 416-amino-acid chain: Tryptophan synthase beta chain (416 aa).

The segment at 1–23 (MTSTLPSQPKDMELANSSRPSVH) is disordered. K109 carries the N6-(pyridoxal phosphate)lysine modification.

Belongs to the TrpB family. Tetramer of two alpha and two beta chains. Requires pyridoxal 5'-phosphate as cofactor.

It carries out the reaction (1S,2R)-1-C-(indol-3-yl)glycerol 3-phosphate + L-serine = D-glyceraldehyde 3-phosphate + L-tryptophan + H2O. It participates in amino-acid biosynthesis; L-tryptophan biosynthesis; L-tryptophan from chorismate: step 5/5. Functionally, the beta subunit is responsible for the synthesis of L-tryptophan from indole and L-serine. This Prochlorococcus marinus (strain MIT 9211) protein is Tryptophan synthase beta chain.